The chain runs to 339 residues: Outer membrane protein assembly factor BamC (339 aa).

An N-terminal signal peptide occupies residues 1 to 19 (MKFSRQLVLGSLAVLVLSA). A lipid anchor (N-palmitoyl cysteine) is attached at Cys20. Residue Cys20 is the site of S-diacylglycerol cysteine attachment.

This sequence belongs to the BamC family. In terms of assembly, part of the Bam complex.

The protein resides in the cell outer membrane. Functionally, part of the outer membrane protein assembly complex, which is involved in assembly and insertion of beta-barrel proteins into the outer membrane. This Vibrio cholerae serotype O1 (strain ATCC 39315 / El Tor Inaba N16961) protein is Outer membrane protein assembly factor BamC.